Consider the following 326-residue polypeptide: MNTCTTIRNNWQLDEILELFNTPFNDLILRSHLTHRQFFNNNEIQLAALLNIKTGGCPENCRYCSQSAHYKTDLQKEALLDVENIKKAIQTAKNSGADRFCFAAAWRQLRDKDIEYICNIINLIKSEKLESCASLGMITLDQAKKLKNAGLDFYNHNIDTSRDFYSNVTTTRNYDDRLASLNNIYEAGINICSGGILGLGESIEDRAKMLLTLANLKEHPRSVPINRLVPIKGTPFENNIKVDNIDFIKTIAVTRILMPKSYVRLAAGRKDMSEEMQALCLFAGANSIFYGEKLLTTPNSNCDDDKNLLSKLGIKTKEPVLLNSQN.

Residues 42 to 266 (NEIQLAALLN…LMPKSYVRLA (225 aa)) form the Radical SAM core domain. Residues C57, C61, and C64 each contribute to the [4Fe-4S] cluster site. Residues C101, C132, C192, and R264 each coordinate [2Fe-2S] cluster.

It belongs to the radical SAM superfamily. Biotin synthase family. As to quaternary structure, homodimer. [4Fe-4S] cluster is required as a cofactor. [2Fe-2S] cluster serves as cofactor.

It catalyses the reaction (4R,5S)-dethiobiotin + (sulfur carrier)-SH + 2 reduced [2Fe-2S]-[ferredoxin] + 2 S-adenosyl-L-methionine = (sulfur carrier)-H + biotin + 2 5'-deoxyadenosine + 2 L-methionine + 2 oxidized [2Fe-2S]-[ferredoxin]. Its pathway is cofactor biosynthesis; biotin biosynthesis; biotin from 7,8-diaminononanoate: step 2/2. Catalyzes the conversion of dethiobiotin (DTB) to biotin by the insertion of a sulfur atom into dethiobiotin via a radical-based mechanism. The polypeptide is Biotin synthase (Ehrlichia chaffeensis (strain ATCC CRL-10679 / Arkansas)).